The primary structure comprises 502 residues: Probable mRNA-splicing protein ubp10 (502 aa).

The UBP-type; degenerate zinc finger occupies 56–153 (SQNLYLDTIN…YVMRPTFTKL (98 aa)). Zn(2+) contacts are provided by Cys-89, Cys-92, His-108, and His-114. The USP domain occupies 178–501 (VGMNNIKNND…ESFIQLWERS (324 aa)).

This sequence belongs to the peptidase C19 family.

It is found in the nucleus. May play a role in mRNA splicing. It is unsure if the protein really exhibits hydrolase activity. Could be a competitor of ubiquitin C-terminal hydrolases (UCHs). The protein is Probable mRNA-splicing protein ubp10 (ubp10) of Schizosaccharomyces pombe (strain 972 / ATCC 24843) (Fission yeast).